The following is a 323-amino-acid chain: MIEFGNFYQLIAKNHLSHWLETLPAQIAAWQREQQHGLFKQWSNAVEFLPEITPWRLDLLHSVTAESETPLSEGQLKRIDTLLRNLMPWRKGPFSLYGVDIDTEWRSDWKWDRVLPHLSDLTGRTILDVGCGSGYHLWRMIGAGAHLAVGIDPTQLFLCQFEAVRKLLGNDQRAHLLPLGIEQLPALKAFDTVFSMGVLYHRRSPLEHLWQLKDQLVNEGELVLETLVVDGDENTVLVPGDRYAQMRNVYFIPSAPALKKWLEKCGFVDVRIADVCVTTTEEQCRTEWMVTESLADFLDPNDRSKTVEGYPAPQRAVLIARKR.

Carboxy-S-adenosyl-L-methionine is bound by residues K91, W105, K110, G130, D152–T154, I181–E182, M196, Y200, and R315.

The protein belongs to the class I-like SAM-binding methyltransferase superfamily. CmoB family. In terms of assembly, homotetramer.

The catalysed reaction is carboxy-S-adenosyl-L-methionine + 5-hydroxyuridine(34) in tRNA = 5-carboxymethoxyuridine(34) in tRNA + S-adenosyl-L-homocysteine + H(+). Functionally, catalyzes carboxymethyl transfer from carboxy-S-adenosyl-L-methionine (Cx-SAM) to 5-hydroxyuridine (ho5U) to form 5-carboxymethoxyuridine (cmo5U) at position 34 in tRNAs. This is tRNA U34 carboxymethyltransferase from Salmonella paratyphi A (strain ATCC 9150 / SARB42).